The primary structure comprises 467 residues: Ribulose bisphosphate carboxylase large chain (467 aa).

Positions 1–2 (MS) are excised as a propeptide. Proline 3 carries the post-translational modification N-acetylproline. The residue at position 14 (lysine 14) is an N6,N6,N6-trimethyllysine. Substrate-binding residues include asparagine 123 and threonine 173. Lysine 175 serves as the catalytic Proton acceptor. Lysine 177 provides a ligand contact to substrate. 3 residues coordinate Mg(2+): lysine 201, aspartate 203, and glutamate 204. Lysine 201 is modified (N6-carboxylysine). The active-site Proton acceptor is histidine 294. Substrate-binding residues include arginine 295, histidine 327, and serine 379.

It belongs to the RuBisCO large chain family. Type I subfamily. In terms of assembly, heterohexadecamer of 8 large chains and 8 small chains; disulfide-linked. The disulfide link is formed within the large subunit homodimers. Requires Mg(2+) as cofactor. Post-translationally, the disulfide bond which can form in the large chain dimeric partners within the hexadecamer appears to be associated with oxidative stress and protein turnover.

Its subcellular location is the plastid. The protein resides in the chloroplast. It carries out the reaction 2 (2R)-3-phosphoglycerate + 2 H(+) = D-ribulose 1,5-bisphosphate + CO2 + H2O. The enzyme catalyses D-ribulose 1,5-bisphosphate + O2 = 2-phosphoglycolate + (2R)-3-phosphoglycerate + 2 H(+). Its function is as follows. RuBisCO catalyzes two reactions: the carboxylation of D-ribulose 1,5-bisphosphate, the primary event in carbon dioxide fixation, as well as the oxidative fragmentation of the pentose substrate in the photorespiration process. Both reactions occur simultaneously and in competition at the same active site. The polypeptide is Ribulose bisphosphate carboxylase large chain (Serenoa repens (Saw palmetto)).